A 391-amino-acid polypeptide reads, in one-letter code: Phosphoglycerate kinase (391 aa).

Substrate-binding positions include 21–23, arginine 36, 59–62, arginine 113, and arginine 146; these read DLN and HLGR. Residues lysine 197, glutamate 319, and 345-348 each bind ATP; that span reads GGDT.

Belongs to the phosphoglycerate kinase family. Monomer.

It localises to the cytoplasm. It catalyses the reaction (2R)-3-phosphoglycerate + ATP = (2R)-3-phospho-glyceroyl phosphate + ADP. It participates in carbohydrate degradation; glycolysis; pyruvate from D-glyceraldehyde 3-phosphate: step 2/5. This chain is Phosphoglycerate kinase, found in Pseudoalteromonas atlantica (strain T6c / ATCC BAA-1087).